Here is a 205-residue protein sequence, read N- to C-terminus: MSVVFVAASKLPTPFGEFTMHGFLDEESGKEHVALSMGDIADGAPVLGRLHSECLTGDALFSLRCDCGFQLEGALAAIAEEGRGVLLYLRQEGRGIGLLNKIRAYELQDGGADTVEANLQLGFGADQRDYAMCQPMLAHLGVSSLRLMTNNPRKVKALESYAITVAERVPLQKGLNKHNRRYLATKAGKLGHMLGSLHQGEAETT.

R49–E53 is a GTP binding site. Residues C54, C65, and C67 each coordinate Zn(2+). Residues Q70, E92–R94, and T114 contribute to the GTP site. The active-site Proton acceptor is the D126. Residue R128 is the Nucleophile of the active site. The GTP site is built by T149 and K154.

Belongs to the GTP cyclohydrolase II family. Zn(2+) serves as cofactor.

The enzyme catalyses GTP + 4 H2O = 2,5-diamino-6-hydroxy-4-(5-phosphoribosylamino)-pyrimidine + formate + 2 phosphate + 3 H(+). Its pathway is cofactor biosynthesis; riboflavin biosynthesis; 5-amino-6-(D-ribitylamino)uracil from GTP: step 1/4. In terms of biological role, catalyzes the conversion of GTP to 2,5-diamino-6-ribosylamino-4(3H)-pyrimidinone 5'-phosphate (DARP), formate and pyrophosphate. This chain is GTP cyclohydrolase-2, found in Pseudomonas aeruginosa (strain LESB58).